A 315-amino-acid polypeptide reads, in one-letter code: Methionyl-tRNA formyltransferase (315 aa).

Residue 113–116 (SLLP) participates in (6S)-5,6,7,8-tetrahydrofolate binding.

The protein belongs to the Fmt family.

The enzyme catalyses L-methionyl-tRNA(fMet) + (6R)-10-formyltetrahydrofolate = N-formyl-L-methionyl-tRNA(fMet) + (6S)-5,6,7,8-tetrahydrofolate + H(+). Attaches a formyl group to the free amino group of methionyl-tRNA(fMet). The formyl group appears to play a dual role in the initiator identity of N-formylmethionyl-tRNA by promoting its recognition by IF2 and preventing the misappropriation of this tRNA by the elongation apparatus. This chain is Methionyl-tRNA formyltransferase, found in Escherichia coli O17:K52:H18 (strain UMN026 / ExPEC).